A 227-amino-acid chain; its full sequence is Broad specificity amino-acid racemase RacX (227 aa).

Residue 51–53 (DRP) participates in substrate binding. Catalysis depends on Cys-82, which acts as the Proton donor/acceptor. Substrate is bound by residues 83–85 (NTA) and Lys-161. The Proton donor/acceptor role is filled by Cys-191.

Belongs to the aspartate/glutamate racemases family. In terms of assembly, homodimer.

It catalyses the reaction an L-alpha-amino acid = a D-alpha-amino acid. The enzyme catalyses (2S,6S)-2,6-diaminopimelate = meso-2,6-diaminopimelate. The catalysed reaction is L-lysine = D-lysine. It carries out the reaction L-arginine = D-arginine. It catalyses the reaction L-ornithine = D-ornithine. The enzyme catalyses L-histidine = D-histidine. The catalysed reaction is L-alanine = D-alanine. It carries out the reaction L-tyrosine = D-tyrosine. It catalyses the reaction L-phenylalanine = D-phenylalanine. The enzyme catalyses L-serine = D-serine. The catalysed reaction is L-glutamine = D-glutamine. It carries out the reaction L-methionine = D-methionine. It catalyses the reaction L-asparagine = D-asparagine. The enzyme catalyses L-homoserine = D-homoserine. In terms of biological role, amino-acid racemase able to utilize a broad range of substrates. Preferentially catalyzes the epimerization of LL-diaminopimelate, as well as the racemization of D-lysine, L-arginine, L-ornithine, L-lysine and D-arginine. Has lower activity against D-ornithine, L-histidine, L-alanine, L-tyrosine, L-phenylalanine, L-serine, L-glutamine, L-methionine, L-asparagine and L-homoserine. Has weak activity against L-norleucine, L-aminobutyric acid and L-norvaline. Has no activity toward nine L-amino acids (Thr, Glu, Asp, Val, Leu, Ile, Trp, Cit and Aad). D-amino acids might be used as components of peptidoglycan and/or be involved in peptidoglycan metabolism and remodeling. The polypeptide is Broad specificity amino-acid racemase RacX (racX) (Bacillus subtilis (strain 168)).